The sequence spans 420 residues: Bicoumarin synthase ktnC (420 aa).

Heme is bound at residue Cys362.

It belongs to the cytochrome P450 family. Requires heme as cofactor.

The enzyme catalyses 2 7-demethylsiderin + NADPH + O2 = orlandin + NADP(+) + 2 H2O. It functions in the pathway secondary metabolite biosynthesis. Its function is as follows. Non-reducing polyketide synthase; part of the gene cluster that mediates the biosynthesis of the bicoumarin kotanin. The non-reducing polyketide synthase ktnS first catalyzes the formation of the pentaketidic 4,7-dihydroxy-5-methylcoumarin from acetyl coenzyme A and 4 malonyl coenzyme A molecules. Further O-methylation by ktnB leads to the formation of 7-demethylsiderin. Then, an oxidative phenol coupling catalyzed by the cytochrome P450 monooxygenase ktnC forms the 8,8'-dimer P-orlandin via dimerization the monomeric precursor, 7-demethylsiderin. P-orlandin is subsequently O-methylated in a stepwise fashion to demethylkotanin and kotanin. The chain is Bicoumarin synthase ktnC from Aspergillus niger (strain ATCC MYA-4892 / CBS 513.88 / FGSC A1513).